A 546-amino-acid chain; its full sequence is Sulfite oxidase, mitochondrial (546 aa).

A mitochondrion-targeting transit peptide spans 1–80 (MLPRLYRSVA…YHDHRCRASQ (80 aa)). One can recognise a Cytochrome b5 heme-binding domain in the interval 83–162 (PRIYSKEDVR…LAEYKIGELN (80 aa)). H119 is a binding site for heme b. S124 carries the phosphoserine modification. Residues H144, Q146, and H148 each contribute to the heme b site. The hinge stretch occupies residues 166–175 (RMSPPLEASD). The interval 176 to 402 (PYSNDPMRHP…YSHWQRRDYK (227 aa)) is moco domain. Residues 216 to 220 (FTRNH), C265, D323, H362, R367, and 378 to 380 (HVK) contribute to the Mo-molybdopterin site. The tract at residues 403-539 (GFSPSVDWDT…RGVLSNAWHR (137 aa)) is homodimerization.

In terms of assembly, homodimer. The cofactor is heme b. Requires Mo-molybdopterin as cofactor.

It is found in the mitochondrion intermembrane space. It carries out the reaction sulfite + O2 + H2O = sulfate + H2O2. Its pathway is energy metabolism; sulfur metabolism. Its function is as follows. Catalyzes the oxidation of sulfite to sulfate, the terminal reaction in the oxidative degradation of sulfur-containing amino acids. This chain is Sulfite oxidase, mitochondrial, found in Rattus norvegicus (Rat).